The chain runs to 287 residues: Large ribosomal subunit protein uL2 (287 aa).

The segment at 221–287 is disordered; that stretch reads RGSVMNPCDH…SKRSRGGRDS (67 aa). Residues 271 to 287 show a composition bias toward basic residues; the sequence is LRKRRKTSKRSRGGRDS.

Belongs to the universal ribosomal protein uL2 family. Part of the 50S ribosomal subunit. Forms a bridge to the 30S subunit in the 70S ribosome.

In terms of biological role, one of the primary rRNA binding proteins. Required for association of the 30S and 50S subunits to form the 70S ribosome, for tRNA binding and peptide bond formation. It has been suggested to have peptidyltransferase activity; this is somewhat controversial. Makes several contacts with the 16S rRNA in the 70S ribosome. The sequence is that of Large ribosomal subunit protein uL2 from Synechococcus sp. (strain CC9902).